A 364-amino-acid polypeptide reads, in one-letter code: S-adenosylmethionine:tRNA ribosyltransferase-isomerase (364 aa).

The protein belongs to the QueA family. In terms of assembly, monomer.

Its subcellular location is the cytoplasm. It carries out the reaction 7-aminomethyl-7-carbaguanosine(34) in tRNA + S-adenosyl-L-methionine = epoxyqueuosine(34) in tRNA + adenine + L-methionine + 2 H(+). The protein operates within tRNA modification; tRNA-queuosine biosynthesis. In terms of biological role, transfers and isomerizes the ribose moiety from AdoMet to the 7-aminomethyl group of 7-deazaguanine (preQ1-tRNA) to give epoxyqueuosine (oQ-tRNA). This chain is S-adenosylmethionine:tRNA ribosyltransferase-isomerase, found in Bradyrhizobium sp. (strain BTAi1 / ATCC BAA-1182).